The following is a 570-amino-acid chain: Small ribosomal subunit protein uS2c (570 aa).

The tract at residues 1 to 306 (MLNKKPPYLI…IKLNPLSTPQ (306 aa)) is N-terminal extension. 2 TRAM domains span residues 28-89 (KLIP…KLIK) and 104-169 (ALTP…VATV).

It belongs to the universal ribosomal protein uS2 family.

Its subcellular location is the plastid. It is found in the chloroplast. In Chlamydomonas reinhardtii (Chlamydomonas smithii), this protein is Small ribosomal subunit protein uS2c (rps2-1).